The sequence spans 432 residues: Adenosylhomocysteinase (432 aa).

The substrate site is built by threonine 56, aspartate 131, and glutamate 156. 157–159 is an NAD(+) binding site; that stretch reads TTT. Residues lysine 186 and aspartate 190 each contribute to the substrate site. Residues asparagine 191, 222–227, glutamate 243, 299–301, and asparagine 346 contribute to the NAD(+) site; these read GDVGKG and IGH.

Belongs to the adenosylhomocysteinase family. The cofactor is NAD(+).

The catalysed reaction is S-adenosyl-L-homocysteine + H2O = L-homocysteine + adenosine. Its pathway is amino-acid biosynthesis; L-homocysteine biosynthesis; L-homocysteine from S-adenosyl-L-homocysteine: step 1/1. Its function is as follows. Adenosylhomocysteine is a competitive inhibitor of S-adenosyl-L-methionine-dependent methyl transferase reactions; therefore adenosylhomocysteinase may play a key role in the control of methylations via regulation of the intracellular concentration of adenosylhomocysteine. The chain is Adenosylhomocysteinase (Ahcy13) from Anopheles gambiae (African malaria mosquito).